The following is a 280-amino-acid chain: Fructose-1,6-bisphosphatase class 1 (280 aa).

Glutamate 64, aspartate 83, leucine 85, and aspartate 86 together coordinate Mg(2+). Substrate-binding positions include 86-89 (DGSS), tyrosine 189, and lysine 220. Glutamate 226 serves as a coordination point for Mg(2+).

This sequence belongs to the FBPase class 1 family. In terms of assembly, homotetramer. Mg(2+) serves as cofactor.

It is found in the cytoplasm. The catalysed reaction is beta-D-fructose 1,6-bisphosphate + H2O = beta-D-fructose 6-phosphate + phosphate. It functions in the pathway carbohydrate biosynthesis; gluconeogenesis. This Campylobacter jejuni subsp. jejuni serotype O:6 (strain 81116 / NCTC 11828) protein is Fructose-1,6-bisphosphatase class 1.